The following is a 636-amino-acid chain: Asparagine synthetase domain-containing protein 1 (636 aa).

The active-site Nucleophile is Cys2. In terms of domain architecture, Glutamine amidotransferase type-2 spans Cys2–Arg187. Residues Gln291–Lys607 form the Asparagine synthetase domain.

In Gallus gallus (Chicken), this protein is Asparagine synthetase domain-containing protein 1 (ASNSD1).